We begin with the raw amino-acid sequence, 398 residues long: L-talarate/galactarate dehydratase (398 aa).

Residues 46 to 48 (DAK), 82 to 83 (KR), and Lys195 contribute to the substrate site. The active-site Proton acceptor is the Lys197. A Mg(2+)-binding site is contributed by Asp226. Substrate is bound at residue Asn228. Mg(2+) contacts are provided by Glu252 and Glu278. His328 serves as the catalytic Proton donor/acceptor. Residue Glu348 participates in substrate binding.

Belongs to the mandelate racemase/muconate lactonizing enzyme family. Homooctamer; tetramer of dimers. Mg(2+) serves as cofactor.

The enzyme catalyses L-altrarate = 5-dehydro-4-deoxy-D-glucarate + H2O. It carries out the reaction galactarate = 5-dehydro-4-deoxy-D-glucarate + H2O. It catalyses the reaction L-altrarate = galactarate. Competitively inhibited by tartronate. In terms of biological role, catalyzes the efficient dehydration of both L-talarate (also called L-altrarate) and galactarate to 5-keto-4-deoxy-D-glucarate (5-KDG). Also catalyzes the epimerization of L-talarate to galactarate; epimerization occurs in competition with dehydration. Is required for the utilization of L-talarate as a carbon source. Also functions in galactarate utilization. Is not active on other acid sugars. The sequence is that of L-talarate/galactarate dehydratase from Salmonella typhimurium (strain LT2 / SGSC1412 / ATCC 700720).